We begin with the raw amino-acid sequence, 556 residues long: 2-succinyl-5-enolpyruvyl-6-hydroxy-3-cyclohexene-1-carboxylate synthase (556 aa).

The protein belongs to the TPP enzyme family. MenD subfamily. As to quaternary structure, homodimer. It depends on Mg(2+) as a cofactor. Mn(2+) serves as cofactor. Requires thiamine diphosphate as cofactor.

It carries out the reaction isochorismate + 2-oxoglutarate + H(+) = 5-enolpyruvoyl-6-hydroxy-2-succinyl-cyclohex-3-ene-1-carboxylate + CO2. It functions in the pathway quinol/quinone metabolism; 1,4-dihydroxy-2-naphthoate biosynthesis; 1,4-dihydroxy-2-naphthoate from chorismate: step 2/7. Its pathway is quinol/quinone metabolism; menaquinone biosynthesis. Catalyzes the thiamine diphosphate-dependent decarboxylation of 2-oxoglutarate and the subsequent addition of the resulting succinic semialdehyde-thiamine pyrophosphate anion to isochorismate to yield 2-succinyl-5-enolpyruvyl-6-hydroxy-3-cyclohexene-1-carboxylate (SEPHCHC). The protein is 2-succinyl-5-enolpyruvyl-6-hydroxy-3-cyclohexene-1-carboxylate synthase of Salmonella choleraesuis (strain SC-B67).